Reading from the N-terminus, the 174-residue chain is 3-hydroxydecanoyl-[acyl-carrier-protein] dehydratase (174 aa).

The active site involves H71.

The protein belongs to the thioester dehydratase family. FabA subfamily. As to quaternary structure, homodimer.

It is found in the cytoplasm. It carries out the reaction a (3R)-hydroxyacyl-[ACP] = a (2E)-enoyl-[ACP] + H2O. The catalysed reaction is (3R)-hydroxydecanoyl-[ACP] = (2E)-decenoyl-[ACP] + H2O. The enzyme catalyses (2E)-decenoyl-[ACP] = (3Z)-decenoyl-[ACP]. The protein operates within lipid metabolism; fatty acid biosynthesis. Functionally, necessary for the introduction of cis unsaturation into fatty acids. Catalyzes the dehydration of (3R)-3-hydroxydecanoyl-ACP to E-(2)-decenoyl-ACP and then its isomerization to Z-(3)-decenoyl-ACP. Can catalyze the dehydratase reaction for beta-hydroxyacyl-ACPs with saturated chain lengths up to 16:0, being most active on intermediate chain length. In Nitrobacter hamburgensis (strain DSM 10229 / NCIMB 13809 / X14), this protein is 3-hydroxydecanoyl-[acyl-carrier-protein] dehydratase.